Consider the following 93-residue polypeptide: Small ribosomal subunit protein uS19 (93 aa).

It belongs to the universal ribosomal protein uS19 family.

Functionally, protein S19 forms a complex with S13 that binds strongly to the 16S ribosomal RNA. The polypeptide is Small ribosomal subunit protein uS19 (Helicobacter pylori (strain G27)).